Reading from the N-terminus, the 218-residue chain is ATP phosphoribosyltransferase (218 aa).

It belongs to the ATP phosphoribosyltransferase family. Short subfamily. In terms of assembly, heteromultimer composed of HisG and HisZ subunits.

It localises to the cytoplasm. The catalysed reaction is 1-(5-phospho-beta-D-ribosyl)-ATP + diphosphate = 5-phospho-alpha-D-ribose 1-diphosphate + ATP. Its pathway is amino-acid biosynthesis; L-histidine biosynthesis; L-histidine from 5-phospho-alpha-D-ribose 1-diphosphate: step 1/9. In terms of biological role, catalyzes the condensation of ATP and 5-phosphoribose 1-diphosphate to form N'-(5'-phosphoribosyl)-ATP (PR-ATP). Has a crucial role in the pathway because the rate of histidine biosynthesis seems to be controlled primarily by regulation of HisG enzymatic activity. This is ATP phosphoribosyltransferase from Acaryochloris marina (strain MBIC 11017).